The chain runs to 314 residues: MQIQCFESITQKYPQFPTALLANEEPIQNGEPFILYGTKLDITKLEKFQQKCGQNFQIFDVWMVAKNIIVLLKGQWFSDFIKFTHDVEVDIAKLDFSPKLSQAGLLVMDMDSTAIQIECIDEIAKLAGVGELVSAITESAMRGELDFEQSLRCRVGTLKGAPESILQQVRENLPLMSGLVETIQTLQKYGWKTAIASGGFTYFADYLKALLQLDFAASNQFDIEDGKLTGLVKGDVVDAQYKAKTLQHLLEEYGIDSRHSIAIGDGANDLAMMNVAGLGVAFHAKPKVQPQAQIVVNFADLTALLCLLSANDRI.

The active-site Nucleophile is Asp-109. Mg(2+) contacts are provided by Asp-109 and Asp-111. Catalysis depends on Asp-111, which acts as the Proton donor. Residues Glu-118, Arg-154, 197 to 198 (SG), and Lys-242 contribute to the substrate site. Asp-265 is a binding site for Mg(2+). Asn-268 lines the substrate pocket.

The protein belongs to the HAD-like hydrolase superfamily. SerB family. Requires Mg(2+) as cofactor.

It catalyses the reaction O-phospho-L-serine + H2O = L-serine + phosphate. The catalysed reaction is O-phospho-D-serine + H2O = D-serine + phosphate. The protein operates within amino-acid biosynthesis; L-serine biosynthesis; L-serine from 3-phospho-D-glycerate: step 3/3. Catalyzes the dephosphorylation of phosphoserine (P-Ser). The polypeptide is Phosphoserine phosphatase (serB) (Haemophilus influenzae (strain ATCC 51907 / DSM 11121 / KW20 / Rd)).